A 672-amino-acid polypeptide reads, in one-letter code: tRNA 5-methylaminomethyl-2-thiouridine biosynthesis bifunctional protein MnmC (672 aa).

Positions 1–243 (MTSITHAELG…KREMIAGCME (243 aa)) are tRNA (mnm(5)s(2)U34)-methyltransferase. The tract at residues 269-672 (IGGGIASAAL…LRKGKAITEL (404 aa)) is FAD-dependent cmnm(5)s(2)U34 oxidoreductase.

The protein in the N-terminal section; belongs to the methyltransferase superfamily. tRNA (mnm(5)s(2)U34)-methyltransferase family. This sequence in the C-terminal section; belongs to the DAO family. It depends on FAD as a cofactor.

The protein resides in the cytoplasm. It carries out the reaction 5-aminomethyl-2-thiouridine(34) in tRNA + S-adenosyl-L-methionine = 5-methylaminomethyl-2-thiouridine(34) in tRNA + S-adenosyl-L-homocysteine + H(+). Functionally, catalyzes the last two steps in the biosynthesis of 5-methylaminomethyl-2-thiouridine (mnm(5)s(2)U) at the wobble position (U34) in tRNA. Catalyzes the FAD-dependent demodification of cmnm(5)s(2)U34 to nm(5)s(2)U34, followed by the transfer of a methyl group from S-adenosyl-L-methionine to nm(5)s(2)U34, to form mnm(5)s(2)U34. In Vibrio vulnificus (strain YJ016), this protein is tRNA 5-methylaminomethyl-2-thiouridine biosynthesis bifunctional protein MnmC.